The following is a 387-amino-acid chain: Oleoyl-12-hydroxylase FAH12 (387 aa).

Residues Met1–Pro34 are disordered. The next 2 membrane-spanning stretches (helical) occupy residues Ala61 to Ile81 and Val88 to Gly108. The short motif at His109–His113 is the Histidine box-1 element. A helical membrane pass occupies residues Leu121–Trp141. A Histidine box-2 motif is present at residues His145–His149. Helical transmembrane passes span Val183 to Ser203, Ile229 to Ala249, and Ala253 to Ile273. Positions His319–His323 match the Histidine box-3 motif.

The protein belongs to the fatty acid desaturase type 1 family. Expressed in seeds. Barely detected in leaves.

The protein localises to the microsome membrane. It carries out the reaction a 1-acyl-2-(9Z)-octadecenoyl-sn-glycero-3-phosphocholine + 2 Fe(II)-[cytochrome b5] + O2 + 2 H(+) = a 1-acyl-2-[(R)-12-hydroxyoleoyl]-sn-glycero-3-phosphocholine + 2 Fe(III)-[cytochrome b5] + H2O. Its pathway is lipid metabolism; monounsaturated fatty acid biosynthesis. With respect to regulation, inhibited by oleoyloxyethyl phosphocholine. Its function is as follows. Oleoyl-12-hydroxylase involved in the biosynthesis of ricinoleate (12-hydroxy-cis-9-octadecenoate), the major fatty acid constituent of the oil seeds from castor bean plants. Catalyzes the hydroxylation at the 12-position of 1-acyl-2-oleoyl-sn-glycero-3-phosphocholine (2-oleoyl-PC), which seems to be the actual physiological subtrate. It uses cytochrome b5 as an electron donor. May also be involved in the production of lesquerolic acid (14-hydroxyeicos-cis-ll-enoic acid) in vitro. This chain is Oleoyl-12-hydroxylase FAH12, found in Ricinus communis (Castor bean).